A 113-amino-acid chain; its full sequence is MLLLLVPAFQVIFTLGGTRAQSVTQLDSQVPVFEEAPVELRCNYSSSVSVYLFWYVQYPNQGLQLLLKYLSGSTLVESINGFEAEFNKSQTSFHLRKPSVHISDTAEYFCAVS.

The signal sequence occupies residues 1–20 (MLLLLVPAFQVIFTLGGTRA). The Ig-like domain maps to 21-113 (QSVTQLDSQV…DTAEYFCAVS (93 aa)). The cysteines at positions 42 and 110 are disulfide-linked. N43 and N87 each carry an N-linked (GlcNAc...) asparagine glycan.

In terms of assembly, alpha-beta TR is a heterodimer composed of an alpha and beta chain; disulfide-linked. The alpha-beta TR is associated with the transmembrane signaling CD3 coreceptor proteins to form the TR-CD3 (TcR or TCR). The assembly of alpha-beta TR heterodimers with CD3 occurs in the endoplasmic reticulum where a single alpha-beta TR heterodimer associates with one CD3D-CD3E heterodimer, one CD3G-CD3E heterodimer and one CD247 homodimer forming a stable octameric structure. CD3D-CD3E and CD3G-CD3E heterodimers preferentially associate with TR alpha and TR beta chains, respectively. The association of the CD247 homodimer is the last step of TcR assembly in the endoplasmic reticulum and is required for transport to the cell surface.

It localises to the cell membrane. Its function is as follows. V region of the variable domain of T cell receptor (TR) alpha chain that participates in the antigen recognition. Alpha-beta T cell receptors are antigen specific receptors which are essential to the immune response and are present on the cell surface of T lymphocytes. Recognize peptide-major histocompatibility (MH) (pMH) complexes that are displayed by antigen presenting cells (APC), a prerequisite for efficient T cell adaptive immunity against pathogens. Binding of alpha-beta TR to pMH complex initiates TR-CD3 clustering on the cell surface and intracellular activation of LCK that phosphorylates the ITAM motifs of CD3G, CD3D, CD3E and CD247 enabling the recruitment of ZAP70. In turn ZAP70 phosphorylates LAT, which recruits numerous signaling molecules to form the LAT signalosome. The LAT signalosome propagates signal branching to three major signaling pathways, the calcium, the mitogen-activated protein kinase (MAPK) kinase and the nuclear factor NF-kappa-B (NF-kB) pathways, leading to the mobilization of transcription factors that are critical for gene expression and essential for T cell growth and differentiation. The T cell repertoire is generated in the thymus, by V-(D)-J rearrangement. This repertoire is then shaped by intrathymic selection events to generate a peripheral T cell pool of self-MH restricted, non-autoaggressive T cells. Post-thymic interaction of alpha-beta TR with the pMH complexes shapes TR structural and functional avidity. In Homo sapiens (Human), this protein is T cell receptor alpha variable 8-6.